Reading from the N-terminus, the 105-residue chain is Large ribosomal subunit protein uL24 (105 aa).

The protein belongs to the universal ribosomal protein uL24 family. Part of the 50S ribosomal subunit.

One of two assembly initiator proteins, it binds directly to the 5'-end of the 23S rRNA, where it nucleates assembly of the 50S subunit. In terms of biological role, one of the proteins that surrounds the polypeptide exit tunnel on the outside of the subunit. In Marinomonas sp. (strain MWYL1), this protein is Large ribosomal subunit protein uL24.